The chain runs to 469 residues: UDP-N-acetylmuramate--L-alanine ligase (469 aa).

ATP is bound at residue 113-119 (GTHGKTT).

It belongs to the MurCDEF family.

It is found in the cytoplasm. It catalyses the reaction UDP-N-acetyl-alpha-D-muramate + L-alanine + ATP = UDP-N-acetyl-alpha-D-muramoyl-L-alanine + ADP + phosphate + H(+). The protein operates within cell wall biogenesis; peptidoglycan biosynthesis. Cell wall formation. This is UDP-N-acetylmuramate--L-alanine ligase from Neisseria meningitidis serogroup B (strain ATCC BAA-335 / MC58).